The primary structure comprises 356 residues: Histidinol-phosphate aminotransferase (356 aa).

N6-(pyridoxal phosphate)lysine is present on K208.

This sequence belongs to the class-II pyridoxal-phosphate-dependent aminotransferase family. Histidinol-phosphate aminotransferase subfamily. Homodimer. Requires pyridoxal 5'-phosphate as cofactor.

The enzyme catalyses L-histidinol phosphate + 2-oxoglutarate = 3-(imidazol-4-yl)-2-oxopropyl phosphate + L-glutamate. It functions in the pathway amino-acid biosynthesis; L-histidine biosynthesis; L-histidine from 5-phospho-alpha-D-ribose 1-diphosphate: step 7/9. In Lactococcus lactis subsp. cremoris (strain MG1363), this protein is Histidinol-phosphate aminotransferase.